A 1006-amino-acid chain; its full sequence is DNA polymerase (1006 aa).

This sequence belongs to the DNA polymerase type-B family. As to quaternary structure, interacts with OPG148. Component of the Uracil-DNA glycosylase(UDG)-OPG148-polymerase complex; OPG148 and OPG116/UDG form a heterodimeric processivity factor that associates with OPG071 to form the processive polymerase holoenzyme.

It carries out the reaction DNA(n) + a 2'-deoxyribonucleoside 5'-triphosphate = DNA(n+1) + diphosphate. Catalyzes DNA synthesis. Acquires processivity by associating with a heterodimeric processivity factor comprised of the viral OPG148 and OPG116 proteins, thereby forming the DNA polymerase holoenzyme. Displays 3'- to 5' exonuclease activity. Might participate in viral DNA recombination. Does not perform OPG116/D4synthesis across an abasic site. The chain is DNA polymerase (OPG071) from Monkeypox virus.